The chain runs to 373 residues: Dual-specificity RNA methyltransferase RlmN (373 aa).

The active-site Proton acceptor is the glutamate 94. Residues 100 to 339 enclose the Radical SAM core domain; that stretch reads EDDRATLCVS…VTIRKTRGDD (240 aa). Cysteine 107 and cysteine 344 form a disulfide bridge. Cysteine 114, cysteine 118, and cysteine 121 together coordinate [4Fe-4S] cluster. S-adenosyl-L-methionine contacts are provided by residues 168 to 169, serine 200, 222 to 224, and asparagine 301; these read GE and SLH. The active-site S-methylcysteine intermediate is the cysteine 344.

The protein belongs to the radical SAM superfamily. RlmN family. [4Fe-4S] cluster serves as cofactor.

It is found in the cytoplasm. It carries out the reaction adenosine(2503) in 23S rRNA + 2 reduced [2Fe-2S]-[ferredoxin] + 2 S-adenosyl-L-methionine = 2-methyladenosine(2503) in 23S rRNA + 5'-deoxyadenosine + L-methionine + 2 oxidized [2Fe-2S]-[ferredoxin] + S-adenosyl-L-homocysteine. The catalysed reaction is adenosine(37) in tRNA + 2 reduced [2Fe-2S]-[ferredoxin] + 2 S-adenosyl-L-methionine = 2-methyladenosine(37) in tRNA + 5'-deoxyadenosine + L-methionine + 2 oxidized [2Fe-2S]-[ferredoxin] + S-adenosyl-L-homocysteine. Its function is as follows. Specifically methylates position 2 of adenine 2503 in 23S rRNA and position 2 of adenine 37 in tRNAs. m2A2503 modification seems to play a crucial role in the proofreading step occurring at the peptidyl transferase center and thus would serve to optimize ribosomal fidelity. In Vibrio cholerae serotype O1 (strain M66-2), this protein is Dual-specificity RNA methyltransferase RlmN.